Reading from the N-terminus, the 53-residue chain is Insulin (53 aa).

The propeptide at 1 to 30 (DVEPLLGFLSPKSGQENEVDDFPYKGQGEL) is c peptide. A disulfide bond links Cys-38 and Cys-43.

It belongs to the insulin family. Heterodimer of a B chain and an A chain linked by two disulfide bonds.

The protein resides in the secreted. Functionally, insulin decreases blood glucose concentration. It increases cell permeability to monosaccharides, amino acids and fatty acids. It accelerates glycolysis, the pentose phosphate cycle, and glycogen synthesis in liver. The sequence is that of Insulin (ins) from Anguilla anguilla (European freshwater eel).